Reading from the N-terminus, the 397-residue chain is GTPase Obg (397 aa).

In terms of domain architecture, Obg spans 1 to 159 (MKFVDEAEIR…RMLKLELMLL (159 aa)). Positions 22–44 (SFRREKYVPDGGPDGGDGGDGGS) are disordered. Over residues 33 to 43 (GPDGGDGGDGG) the composition is skewed to gly residues. In terms of domain architecture, OBG-type G spans 160 to 333 (ADVGLLGMPN…LCIKVMDFIE (174 aa)). GTP contacts are provided by residues 166–173 (GMPNAGKS), 191–195 (FTTLV), 213–216 (DIPG), 283–286 (NKVD), and 314–316 (SAV). Mg(2+)-binding residues include serine 173 and threonine 193. Positions 359–389 (TVENYEDDDDFDDDDDDDFDGDDDDDFDGDD) are disordered. The span at 361-389 (ENYEDDDDFDDDDDDDFDGDDDDDFDGDD) shows a compositional bias: acidic residues.

The protein belongs to the TRAFAC class OBG-HflX-like GTPase superfamily. OBG GTPase family. Monomer. It depends on Mg(2+) as a cofactor.

The protein resides in the cytoplasm. In terms of biological role, an essential GTPase which binds GTP, GDP and possibly (p)ppGpp with moderate affinity, with high nucleotide exchange rates and a fairly low GTP hydrolysis rate. Plays a role in control of the cell cycle, stress response, ribosome biogenesis and in those bacteria that undergo differentiation, in morphogenesis control. This is GTPase Obg from Pseudoalteromonas atlantica (strain T6c / ATCC BAA-1087).